The following is a 71-amino-acid chain: Large ribosomal subunit protein bL31 (71 aa).

Positions 16, 18, 37, and 40 each coordinate Zn(2+).

This sequence belongs to the bacterial ribosomal protein bL31 family. Type A subfamily. Part of the 50S ribosomal subunit. The cofactor is Zn(2+).

Binds the 23S rRNA. The protein is Large ribosomal subunit protein bL31 of Pseudomonas entomophila (strain L48).